The primary structure comprises 547 residues: MRVNLLIAMIIFALIWPATALRAAVSKTTWADAPAREFVFVENNSDDNFFVTPGGALDPRLTGANRWTGLKYNGSGTIYQQSLGYIDNGYNTGLYTNWKFDMWLENSPVSSPLTGLRCINWYAGCNMTTSLILPQTTDASGFYGATVTSGGAKWMHGMLSDAFYQYLQQMPVGSSFTMTINACQTSVNYDASSGARCKDQASGNWYVRNVTHTKAANLRLINTHSLAEVFINSDGVPTLGEGNADCRTQTIGSRSGLSCKMVNYTLQTNGLSNTSIHIFPAIANSSLASAVGAYDMQFSLNGSSWKPVSNTAYYYTFNEMKSADSIYVFFSSNFFKQMVNLGISDINTKDLFNFRFQNTTSPESGWYEFSTSNTLIIKPRDFSISIISDEYTQTPSREGYVGSGESALDFGYIVTTSGKTAADEVLIKVTGPAQVIGGRSYCVFSSDDGKAKVPFPATLSFITRNGATKTYDAGCDDSWRDMTDALWLTTPWTDISGEVGQMDKTTVKFSIPMDNAISLRTVDDNGWFGEVSASGEIHVQATWRNIN.

The signal sequence occupies residues 1-20; the sequence is MRVNLLIAMIIFALIWPATA.

Belongs to the EcpD/MatE family. Forms polymers. Interacts with EcpA.

The protein localises to the fimbrium. Part of the ecpRABCDE operon, which encodes the E.coli common pilus (ECP). ECP is found in both commensal and pathogenic strains and plays a dual role in early-stage biofilm development and host cell recognition. Tip pilus adhesin, which is required for assembly of EcpA into fibers. The chain is Fimbria adhesin EcpD (ecpD) from Escherichia coli O6:H1 (strain CFT073 / ATCC 700928 / UPEC).